The chain runs to 215 residues: Thiamine import ATP-binding protein ThiQ (215 aa).

Positions 2 to 215 (IYLNNVILND…GQISQLQKGV (214 aa)) constitute an ABC transporter domain. 32–39 (GESGAGKS) lines the ATP pocket.

This sequence belongs to the ABC transporter superfamily. Thiamine importer (TC 3.A.1.19.1) family. As to quaternary structure, the complex is composed of two ATP-binding proteins (ThiQ), two transmembrane proteins (ThiP) and a solute-binding protein (ThiB).

The protein resides in the cell inner membrane. The catalysed reaction is thiamine(out) + ATP + H2O = thiamine(in) + ADP + phosphate + H(+). Part of the ABC transporter complex ThiBPQ involved in thiamine import. Responsible for energy coupling to the transport system. This Haemophilus influenzae (strain ATCC 51907 / DSM 11121 / KW20 / Rd) protein is Thiamine import ATP-binding protein ThiQ.